A 302-amino-acid polypeptide reads, in one-letter code: Ornithine carbamoyltransferase (302 aa).

Residues 53–56 (STRT), Gln80, Arg104, and 131–134 (HPCQ) contribute to the carbamoyl phosphate site. Residues Asn162, Asp219, and 223 to 224 (SM) contribute to the L-ornithine site. Residues 259–260 (CL) and Arg287 each bind carbamoyl phosphate.

The protein belongs to the aspartate/ornithine carbamoyltransferase superfamily. OTCase family.

The protein localises to the cytoplasm. The catalysed reaction is carbamoyl phosphate + L-ornithine = L-citrulline + phosphate + H(+). It functions in the pathway amino-acid biosynthesis; L-arginine biosynthesis; L-arginine from L-ornithine and carbamoyl phosphate: step 1/3. Its function is as follows. Reversibly catalyzes the transfer of the carbamoyl group from carbamoyl phosphate (CP) to the N(epsilon) atom of ornithine (ORN) to produce L-citrulline. The chain is Ornithine carbamoyltransferase from Hydrogenovibrio crunogenus (strain DSM 25203 / XCL-2) (Thiomicrospira crunogena).